Reading from the N-terminus, the 472-residue chain is Chromosomal replication initiator protein DnaA (472 aa).

The segment at 1-73 (MSNMEHDRWS…LTCWQAEMPE (73 aa)) is domain I, interacts with DnaA modulators. Residues 73–128 (EVCRIDLTVRSPMRAAVTKEAPAPAEHRRDEHRPAADARSHAAAPAPSNHDALGGS) are domain II. The disordered stretch occupies residues 89–127 (VTKEAPAPAEHRRDEHRPAADARSHAAAPAPSNHDALGG). Residues 97 to 112 (AEHRRDEHRPAADARS) are compositionally biased toward basic and acidic residues. Over residues 113-124 (HAAAPAPSNHDA) the composition is skewed to low complexity. Residues 129–351 (PLDPRLTFAS…GAINRLLAHS (223 aa)) form a domain III, AAA+ region region. 4 residues coordinate ATP: glycine 176, glycine 178, lysine 179, and threonine 180. The interval 352-472 (KLNAQPVTLE…VESLKRQLQE (121 aa)) is domain IV, binds dsDNA.

The protein belongs to the DnaA family. As to quaternary structure, oligomerizes as a right-handed, spiral filament on DNA at oriC.

It localises to the cytoplasm. Functionally, plays an essential role in the initiation and regulation of chromosomal replication. ATP-DnaA binds to the origin of replication (oriC) to initiate formation of the DNA replication initiation complex once per cell cycle. Binds the DnaA box (a 9 base pair repeat at the origin) and separates the double-stranded (ds)DNA. Forms a right-handed helical filament on oriC DNA; dsDNA binds to the exterior of the filament while single-stranded (ss)DNA is stabiized in the filament's interior. The ATP-DnaA-oriC complex binds and stabilizes one strand of the AT-rich DNA unwinding element (DUE), permitting loading of DNA polymerase. After initiation quickly degrades to an ADP-DnaA complex that is not apt for DNA replication. Binds acidic phospholipids. This chain is Chromosomal replication initiator protein DnaA, found in Rhodopseudomonas palustris (strain BisB5).